The primary structure comprises 230 residues: Thiamine-triphosphatase (230 aa).

An N-acetylalanine modification is found at Ala2. Residues 5–201 (LIEVERKFLP…AKLIVYLQRF (197 aa)) enclose the CYTH domain. The Mg(2+) site is built by Glu7 and Glu9. Positions 11, 55, 57, 65, and 125 each coordinate substrate. Mg(2+)-binding residues include Asp145, Glu157, and Glu159. A substrate-binding site is contributed by Glu157. Lys193 is a binding site for substrate.

This sequence belongs to the ThTPase family. As to quaternary structure, monomer. Requires Mg(2+) as cofactor.

The protein resides in the cytoplasm. The enzyme catalyses thiamine triphosphate + H2O = thiamine diphosphate + phosphate + H(+). Hydrolase highly specific for thiamine triphosphate (ThTP). The chain is Thiamine-triphosphatase (THTPA) from Macaca fascicularis (Crab-eating macaque).